A 75-amino-acid chain; its full sequence is UPF0154 protein SERP0914 (75 aa).

A helical transmembrane segment spans residues I3–L23.

The protein belongs to the UPF0154 family.

It is found in the membrane. In Staphylococcus epidermidis (strain ATCC 35984 / DSM 28319 / BCRC 17069 / CCUG 31568 / BM 3577 / RP62A), this protein is UPF0154 protein SERP0914.